We begin with the raw amino-acid sequence, 143 residues long: MGSVFLPHLHSGWHVDQAIVTEEERLVVIRFGSDSDRSCMLMDEILYSIAEKVVNFAAIYVCDTTEVPDFNEMYELQDPMTVMFFYKNKHMRCDFGTGNNNKMNFVVDNKQEMIDIIETVFRGARRNKGLVVSPYDYNYKRIQ.

This sequence belongs to the DIM1 family. In terms of assembly, component of the 25S [U4/U6.U5] tri-snRNP.

Its subcellular location is the nucleus. In terms of biological role, essential role in pre-mRNA splicing. Also essential for entry into mitosis (G2/M progression) as well as for chromosome segregation during mitosis. The chain is Spliceosomal protein DIB1 (DIB1) from Eremothecium gossypii (strain ATCC 10895 / CBS 109.51 / FGSC 9923 / NRRL Y-1056) (Yeast).